Reading from the N-terminus, the 349-residue chain is Peroxidase 7 (349 aa).

The N-terminal stretch at 1-22 (MKLAVVSVVVILGVLVAWPVSA) is a signal peptide. 4 cysteine pairs are disulfide-bonded: Cys-60/Cys-136, Cys-93/Cys-98, Cys-142/Cys-341, and Cys-220/Cys-252. His-91 acts as the Proton acceptor in catalysis. Positions 92, 95, 97, 99, and 101 each coordinate Ca(2+). Pro-183 provides a ligand contact to substrate. Residue His-213 participates in heme b binding. Thr-214 contacts Ca(2+). N-linked (GlcNAc...) asparagine glycosylation is present at Asn-231. The Ca(2+) site is built by Asp-262, Thr-265, and Asp-270.

It belongs to the peroxidase family. Classical plant (class III) peroxidase subfamily. Requires heme b as cofactor. It depends on Ca(2+) as a cofactor.

It localises to the secreted. It carries out the reaction 2 a phenolic donor + H2O2 = 2 a phenolic radical donor + 2 H2O. Functionally, removal of H(2)O(2), oxidation of toxic reductants, biosynthesis and degradation of lignin, suberization, auxin catabolism, response to environmental stresses such as wounding, pathogen attack and oxidative stress. These functions might be dependent on each isozyme/isoform in each plant tissue. In Arabidopsis thaliana (Mouse-ear cress), this protein is Peroxidase 7 (PER7).